The following is a 353-amino-acid chain: Uroporphyrinogen decarboxylase (353 aa).

Substrate contacts are provided by residues 30–34 (RQAGR), D79, Y154, S209, and H332.

It belongs to the uroporphyrinogen decarboxylase family. Homodimer.

The protein resides in the cytoplasm. It catalyses the reaction uroporphyrinogen III + 4 H(+) = coproporphyrinogen III + 4 CO2. The protein operates within porphyrin-containing compound metabolism; protoporphyrin-IX biosynthesis; coproporphyrinogen-III from 5-aminolevulinate: step 4/4. In terms of biological role, catalyzes the decarboxylation of four acetate groups of uroporphyrinogen-III to yield coproporphyrinogen-III. This chain is Uroporphyrinogen decarboxylase, found in Mycobacterium ulcerans (strain Agy99).